Here is a 120-residue protein sequence, read N- to C-terminus: MDYEFLRDVTGRVLVRMSMGHEVVGHWFNEEVKDNLSLLDEVEQAARTVKGSERSWQRAGHEYTIWIDGEEVMIRANQLDFSGDEMEEGMSYYDEESLSLCGMEDFLRVVAAYREFVSKA.

This sequence belongs to the UPF0231 family.

The protein is UPF0231 protein YacL of Salmonella paratyphi A (strain ATCC 9150 / SARB42).